We begin with the raw amino-acid sequence, 398 residues long: Protein-glutamate methylesterase/protein-glutamine glutaminase (398 aa).

One can recognise a Response regulatory domain in the interval 4–121 (KVLVVDDSSF…ATNKDDAILL (118 aa)). Asp55 is subject to 4-aspartylphosphate. Residues 133 to 200 (RMYRSSSLTP…SANPTTSSIS (68 aa)) are disordered. Polar residues-rich tracts occupy residues 136–146 (RSSSLTPTSTI) and 168–200 (RLAS…SSIS). Residues 205-398 (SGKQYKLLLI…EAILKESSRG (194 aa)) form the CheB-type methylesterase domain. Catalysis depends on residues Ser217, His244, and Asp340.

This sequence belongs to the CheB family. Post-translationally, phosphorylated by CheA. Phosphorylation of the N-terminal regulatory domain activates the methylesterase activity.

It localises to the cytoplasm. It carries out the reaction [protein]-L-glutamate 5-O-methyl ester + H2O = L-glutamyl-[protein] + methanol + H(+). It catalyses the reaction L-glutaminyl-[protein] + H2O = L-glutamyl-[protein] + NH4(+). In terms of biological role, involved in chemotaxis. Part of a chemotaxis signal transduction system that modulates chemotaxis in response to various stimuli. Catalyzes the demethylation of specific methylglutamate residues introduced into the chemoreceptors (methyl-accepting chemotaxis proteins or MCP) by CheR. Also mediates the irreversible deamidation of specific glutamine residues to glutamic acid. The polypeptide is Protein-glutamate methylesterase/protein-glutamine glutaminase (Shewanella frigidimarina (strain NCIMB 400)).